A 477-amino-acid chain; its full sequence is UDP-N-acetylmuramate--L-alanine ligase (477 aa).

Residue 120–126 coordinates ATP; the sequence is GSHGKTT.

It belongs to the MurCDEF family.

The protein resides in the cytoplasm. The enzyme catalyses UDP-N-acetyl-alpha-D-muramate + L-alanine + ATP = UDP-N-acetyl-alpha-D-muramoyl-L-alanine + ADP + phosphate + H(+). It participates in cell wall biogenesis; peptidoglycan biosynthesis. Functionally, cell wall formation. This chain is UDP-N-acetylmuramate--L-alanine ligase, found in Rickettsia canadensis (strain McKiel).